A 235-amino-acid polypeptide reads, in one-letter code: Peptidyl-tRNA hydrolase (235 aa).

Tyr-14 contacts tRNA. His-19 (proton acceptor) is an active-site residue. Phe-64, Asn-66, and Asn-112 together coordinate tRNA. The interval 186–235 is disordered; that stretch reads RTAPPRSSGGSPKTDKPAKATREPPPAAKPEATPEEETRSPLQRLVDKFR. Positions 198–207 are enriched in basic and acidic residues; sequence KTDKPAKATR.

This sequence belongs to the PTH family. Monomer.

It localises to the cytoplasm. The catalysed reaction is an N-acyl-L-alpha-aminoacyl-tRNA + H2O = an N-acyl-L-amino acid + a tRNA + H(+). Hydrolyzes ribosome-free peptidyl-tRNAs (with 1 or more amino acids incorporated), which drop off the ribosome during protein synthesis, or as a result of ribosome stalling. In terms of biological role, catalyzes the release of premature peptidyl moieties from peptidyl-tRNA molecules trapped in stalled 50S ribosomal subunits, and thus maintains levels of free tRNAs and 50S ribosomes. The protein is Peptidyl-tRNA hydrolase of Dinoroseobacter shibae (strain DSM 16493 / NCIMB 14021 / DFL 12).